An 86-amino-acid polypeptide reads, in one-letter code: Large ribosomal subunit protein bL31B (86 aa).

This sequence belongs to the bacterial ribosomal protein bL31 family. Type B subfamily. As to quaternary structure, part of the 50S ribosomal subunit.

This chain is Large ribosomal subunit protein bL31B, found in Ralstonia pickettii (strain 12J).